A 362-amino-acid chain; its full sequence is tRNA-specific 2-thiouridylase MnmA (362 aa).

Residues 6 to 13 (AMSGGVDS) and L32 each bind ATP. C101 (nucleophile) is an active-site residue. Residues C101 and C197 are joined by a disulfide bond. G125 serves as a coordination point for ATP. The segment at 147-149 (KDQ) is interaction with tRNA. C197 functions as the Cysteine persulfide intermediate in the catalytic mechanism.

It belongs to the MnmA/TRMU family.

The protein localises to the cytoplasm. The catalysed reaction is S-sulfanyl-L-cysteinyl-[protein] + uridine(34) in tRNA + AH2 + ATP = 2-thiouridine(34) in tRNA + L-cysteinyl-[protein] + A + AMP + diphosphate + H(+). Its function is as follows. Catalyzes the 2-thiolation of uridine at the wobble position (U34) of tRNA, leading to the formation of s(2)U34. This chain is tRNA-specific 2-thiouridylase MnmA, found in Acidothermus cellulolyticus (strain ATCC 43068 / DSM 8971 / 11B).